The chain runs to 583 residues: Chloroplast sensor kinase, chloroplastic (583 aa).

The N-terminal 50 residues, 1–50, are a transit peptide targeting the chloroplast; that stretch reads MSSIYLHGLSRRRRIGSVIVAIYMLDSCGAFLSASGSGRYPGFSYRGLSV. Residues 97-277 are GAF; sequence LFQELALSQL…SMDTERAALQ (181 aa). A [3Fe-4S] cluster-binding site is contributed by cysteine 115. Histidine 292 carries the phosphohistidine; by autocatalysis modification. Residues 412-442 are disordered; the sequence is AASGSNGPSNSTTSFSGNGSDVSTYTEDDGA. Residues 414–431 are compositionally biased toward low complexity; the sequence is SGSNGPSNSTTSFSGNGS. Positions 447–583 constitute a Histidine kinase domain; the sequence is SSLFSEMDLE…ALDWTLRKHW (137 aa).

It belongs to the chloroplast sensor kinase protein family. Oligomerizes. Requires [3Fe-4S] cluster as cofactor. Post-translationally, autophosphorylates, possibly on His-292.

It localises to the plastid. Its subcellular location is the chloroplast stroma. The enzyme catalyses ATP + protein L-histidine = ADP + protein N-phospho-L-histidine.. Functionally, sensor kinase that senses the plastoquinone (PQ) redox state involved in stoichiometry adjustment of both photosystems (e.g. long-term adaptation via transcriptional regulation of reaction center genes of photosystems I and II) and state transitions (e.g. short-term adaptation involving reversible post-translational phosphorylation of light-harvesting complex II, LHC II), thus linking photosynthesis with gene expression in chloroplasts. Reduced PQ suppresses its autophosphorylation activity. In Phaeodactylum tricornutum (strain CCAP 1055/1), this protein is Chloroplast sensor kinase, chloroplastic.